Here is a 425-residue protein sequence, read N- to C-terminus: Gamma-glutamyl phosphate reductase (425 aa).

It belongs to the gamma-glutamyl phosphate reductase family.

It is found in the cytoplasm. The enzyme catalyses L-glutamate 5-semialdehyde + phosphate + NADP(+) = L-glutamyl 5-phosphate + NADPH + H(+). It functions in the pathway amino-acid biosynthesis; L-proline biosynthesis; L-glutamate 5-semialdehyde from L-glutamate: step 2/2. Its function is as follows. Catalyzes the NADPH-dependent reduction of L-glutamate 5-phosphate into L-glutamate 5-semialdehyde and phosphate. The product spontaneously undergoes cyclization to form 1-pyrroline-5-carboxylate. This is Gamma-glutamyl phosphate reductase from Symbiobacterium thermophilum (strain DSM 24528 / JCM 14929 / IAM 14863 / T).